The chain runs to 137 residues: Peptide methionine sulfoxide reductase MsrB (137 aa).

The 123-residue stretch at 7–129 (PTENIEKLSD…NSASLNFVDD (123 aa)) folds into the MsrB domain. The Zn(2+) site is built by Cys-46, Cys-49, Cys-95, and Cys-98. Catalysis depends on Cys-118, which acts as the Nucleophile.

This sequence belongs to the MsrB Met sulfoxide reductase family. It depends on Zn(2+) as a cofactor.

It carries out the reaction L-methionyl-[protein] + [thioredoxin]-disulfide + H2O = L-methionyl-(R)-S-oxide-[protein] + [thioredoxin]-dithiol. The chain is Peptide methionine sulfoxide reductase MsrB from Yersinia pseudotuberculosis serotype O:1b (strain IP 31758).